Consider the following 843-residue polypeptide: Taste receptor type 1 member 2 (843 aa).

An N-terminal signal peptide occupies residues 1 to 19; the sequence is MGPQARTLCLLSLLLHVLP. Over 20 to 570 the chain is Extracellular; that stretch reads KPGKLVENSD…TFLEWHEVPT (551 aa). N-linked (GlcNAc...) asparagine glycosylation is found at Asn-87, Asn-296, Asn-316, Asn-355, Asn-372, Asn-432, Asn-484, Asn-491, and Asn-531. Residues 571-591 form a helical membrane-spanning segment; that stretch reads IVVAILAALGFFSTLAILFIF. Topologically, residues 592 to 606 are cytoplasmic; it reads WRHFQTPMVRSAGGP. A helical transmembrane segment spans residues 607 to 627; it reads MCFLMLVPLLLAFGMVPVYVG. The Extracellular segment spans residues 628 to 642; the sequence is PPTVFSCFCRQAFFT. Residues 643–663 traverse the membrane as a helical segment; sequence VCFSICLSCITVRSFQIVCVF. Topologically, residues 664–682 are cytoplasmic; the sequence is KMARRLPSAYSFWMRYHGP. Residues 683 to 703 form a helical membrane-spanning segment; that stretch reads YVFVAFITAIKVALVVGNMLA. Residues 704–731 are Extracellular-facing; it reads TTINPIGRTDPDDPNIMILSCHPNYRNG. The helical transmembrane segment at 732–752 threads the bilayer; it reads LLFNTSMDLLLSVLGFSFAYM. Residues 753 to 764 are Cytoplasmic-facing; that stretch reads GKELPTNYNEAK. The helical transmembrane segment at 765-785 threads the bilayer; the sequence is FITLSMTFSFTSSISLCTFMS. The Extracellular portion of the chain corresponds to 786 to 789; it reads VHDG. A helical transmembrane segment spans residues 790 to 810; that stretch reads VLVTIMDLLVTVLNFLAIGLG. The Cytoplasmic segment spans residues 811-843; it reads YFGPKCYMILFYPERNTSAYFNSMIQGYTMRKS.

Belongs to the G-protein coupled receptor 3 family. TAS1R subfamily. Forms heterodimers with TAS1R3. Abundantly expressed in circumvallate and foliate papillae.

Its subcellular location is the cell membrane. Functionally, putative taste receptor. TAS1R2/TAS1R3 recognizes diverse natural and synthetic sweeteners. This Rattus norvegicus (Rat) protein is Taste receptor type 1 member 2 (Tas1r2).